Consider the following 175-residue polypeptide: MKSTDRILAHKYSIALSSLADKKDLPSLLAELKEIHLAIGNSSFFYSPAVPKKEKKQALSSALKTDNFLIKNTLFLLIDNKKLNLLGQIIIDLNKTIESFTNTVSAEVYCAREMDDKQQNAVIESLKKYFKANFINADFKQDKTLISGLKIKTADYVIDGSTKNNLQKLKQVLQD.

This sequence belongs to the ATPase delta chain family. In terms of assembly, F-type ATPases have 2 components, F(1) - the catalytic core - and F(0) - the membrane proton channel. F(1) has five subunits: alpha(3), beta(3), gamma(1), delta(1), epsilon(1). F(0) has three main subunits: a(1), b(2) and c(10-14). The alpha and beta chains form an alternating ring which encloses part of the gamma chain. F(1) is attached to F(0) by a central stalk formed by the gamma and epsilon chains, while a peripheral stalk is formed by the delta and b chains.

It localises to the cell membrane. Its function is as follows. F(1)F(0) ATP synthase produces ATP from ADP in the presence of a proton or sodium gradient. F-type ATPases consist of two structural domains, F(1) containing the extramembraneous catalytic core and F(0) containing the membrane proton channel, linked together by a central stalk and a peripheral stalk. During catalysis, ATP synthesis in the catalytic domain of F(1) is coupled via a rotary mechanism of the central stalk subunits to proton translocation. Functionally, this protein is part of the stalk that links CF(0) to CF(1). It either transmits conformational changes from CF(0) to CF(1) or is implicated in proton conduction. This chain is ATP synthase subunit delta, found in Elusimicrobium minutum (strain Pei191).